A 341-amino-acid chain; its full sequence is MPEDNLYDISIIGGGPIGMFAATYAGMRSAKVQLLESLGQLGGQPQALFSEKTIYDIPGFSSISGKDLIRNLNTQLQQFNVDVYVNSPVLNIQKTEKNQFKIITNNRISYSKSIIISTGIGSFEPRRLRIANAEALENDKLFYTVNDPSIFENKTIAIAGGGDSAIDWALELNTIAKDTIVIHRRNQFRAMESNVDKLKESGSKIMTPYTIDNLSTDNSHNNLTIQLKKVRTKDTVELSVDALLVNYGFMSNNSILKSWDLDLITTKNNLIPVNSKLETNLQNVYAIGDIANYPGRIDLIAVGMGEAPMAVNNALESLYPEKIQPKHSTQLVKNIKNNENN.

FAD is bound by residues E36, Q44, F49, V89, F123, D289, and T329.

The protein belongs to the ferredoxin--NADP reductase type 2 family. Homodimer. Requires FAD as cofactor.

The enzyme catalyses 2 reduced [2Fe-2S]-[ferredoxin] + NADP(+) + H(+) = 2 oxidized [2Fe-2S]-[ferredoxin] + NADPH. The sequence is that of Ferredoxin--NADP reductase from Ligilactobacillus salivarius (strain UCC118) (Lactobacillus salivarius).